A 1086-amino-acid polypeptide reads, in one-letter code: DNA polymerase delta catalytic subunit (1086 aa).

Residues 1-64 (MTDRSSNEGV…KTSSFEDELA (64 aa)) are disordered. The segment covering 29-58 (EITDVKRRRLSERNGYGDKKGSSSKEKTSS) has biased composition (basic and acidic residues). The Zn(2+) site is built by Cys993, Cys996, Cys1008, and Cys1011. The CysA-type zinc-finger motif lies at 993 to 1011 (CLGCKAPIKKGKTALCENC). Positions 1040, 1043, 1053, and 1058 each coordinate [4Fe-4S] cluster. The CysB motif signature appears at 1040–1058 (CQRCQGSMHQDVICTSRDC).

Belongs to the DNA polymerase type-B family. As to quaternary structure, heterotetramer that consist of the pol3, cdc1, cdc27 and cdm1 subunits. The pol3 subunit contains the polymerase active site and most likely the active site for the 3'-5' exonuclease activity. The cofactor is [4Fe-4S] cluster.

The protein localises to the nucleus. It catalyses the reaction DNA(n) + a 2'-deoxyribonucleoside 5'-triphosphate = DNA(n+1) + diphosphate. Functionally, catalytic component of DNA polymerase delta (DNA polymerase III) which participates in chromosomal DNA replication. Required during synthesis of the lagging DNA strands at the replication fork, binds at/or near replication origins and moves along DNA with the replication fork. Participates in leading strand synthesis during replication initiation and termination. Has 3'-5' proofreading exonuclease activity that corrects errors arising during DNA replication. The protein is DNA polymerase delta catalytic subunit (pol3) of Schizosaccharomyces pombe (strain 972 / ATCC 24843) (Fission yeast).